Here is a 302-residue protein sequence, read N- to C-terminus: tRNA dimethylallyltransferase 2 (302 aa).

ATP is bound at residue 6–13 (GPTACGKT). 8–13 (TACGKT) is a substrate binding site. Interaction with substrate tRNA regions lie at residues 31-34 (DSRQ) and 154-158 (QRAIR).

It belongs to the IPP transferase family. Monomer. Requires Mg(2+) as cofactor.

It catalyses the reaction adenosine(37) in tRNA + dimethylallyl diphosphate = N(6)-dimethylallyladenosine(37) in tRNA + diphosphate. Functionally, catalyzes the transfer of a dimethylallyl group onto the adenine at position 37 in tRNAs that read codons beginning with uridine, leading to the formation of N6-(dimethylallyl)adenosine (i(6)A). The chain is tRNA dimethylallyltransferase 2 from Porphyromonas gingivalis (strain ATCC BAA-308 / W83).